We begin with the raw amino-acid sequence, 469 residues long: Argininosuccinate lyase (469 aa).

This sequence belongs to the lyase 1 family. Argininosuccinate lyase subfamily.

The protein localises to the cytoplasm. It carries out the reaction 2-(N(omega)-L-arginino)succinate = fumarate + L-arginine. The protein operates within amino-acid biosynthesis; L-arginine biosynthesis; L-arginine from L-ornithine and carbamoyl phosphate: step 3/3. This is Argininosuccinate lyase from Burkholderia cenocepacia (strain ATCC BAA-245 / DSM 16553 / LMG 16656 / NCTC 13227 / J2315 / CF5610) (Burkholderia cepacia (strain J2315)).